The chain runs to 419 residues: 26S proteasome regulatory subunit 8 homolog B (419 aa).

202 to 209 (GPPGTGKT) is an ATP binding site. Lys406 participates in a covalent cross-link: Glycyl lysine isopeptide (Lys-Gly) (interchain with G-Cter in ubiquitin).

The protein belongs to the AAA ATPase family. As to quaternary structure, component of the 19S regulatory particle (RP/PA700) base subcomplex of the 26S proteasome. The 26S proteasome is composed of a core protease (CP), known as the 20S proteasome, capped at one or both ends by the 19S regulatory particle (RP/PA700). The RP/PA700 complex is composed of at least 17 different subunits in two subcomplexes, the base and the lid, which form the portions proximal and distal to the 20S proteolytic core, respectively.

The protein resides in the cytoplasm. Its subcellular location is the nucleus. Its function is as follows. The 26S proteasome is involved in the ATP-dependent degradation of ubiquitinated proteins. The regulatory (or ATPase) complex confers ATP dependency and substrate specificity to the 26S complex. The polypeptide is 26S proteasome regulatory subunit 8 homolog B (RPT6B) (Arabidopsis thaliana (Mouse-ear cress)).